Reading from the N-terminus, the 510-residue chain is NAD(P)H-quinone oxidoreductase subunit 2, chloroplastic (510 aa).

Helical transmembrane passes span 24 to 44 (LLLF…GLIL), 59 to 79 (WFYF…LFRW), 99 to 119 (IFQF…VEYI), 124 to 144 (MAIT…MFLC), 149 to 169 (LITI…LSGY), 184 to 204 (LLMG…LYGL), 229 to 249 (ISIA…PAPF), 295 to 315 (WHLL…LIAI), 323 to 343 (MLAY…IVGD), 347 to 367 (GYAS…GTFA), 395 to 415 (ALSL…AGFF), and 418 to 438 (LHLF…IGLL).

This sequence belongs to the complex I subunit 2 family. As to quaternary structure, NDH is composed of at least 16 different subunits, 5 of which are encoded in the nucleus.

Its subcellular location is the plastid. The protein localises to the chloroplast thylakoid membrane. It carries out the reaction a plastoquinone + NADH + (n+1) H(+)(in) = a plastoquinol + NAD(+) + n H(+)(out). The catalysed reaction is a plastoquinone + NADPH + (n+1) H(+)(in) = a plastoquinol + NADP(+) + n H(+)(out). NDH shuttles electrons from NAD(P)H:plastoquinone, via FMN and iron-sulfur (Fe-S) centers, to quinones in the photosynthetic chain and possibly in a chloroplast respiratory chain. The immediate electron acceptor for the enzyme in this species is believed to be plastoquinone. Couples the redox reaction to proton translocation, and thus conserves the redox energy in a proton gradient. The chain is NAD(P)H-quinone oxidoreductase subunit 2, chloroplastic from Muilla maritima (Sea muilla).